The primary structure comprises 314 residues: Dihydroorotate dehydrogenase (fumarate) (314 aa).

Residues alanine 21 and 45–46 (KS) each bind FMN. Residues lysine 45, 69 to 73 (NSMGL), and asparagine 129 each bind substrate. Position 129 (asparagine 129) interacts with FMN. Cysteine 132 functions as the Nucleophile in the catalytic mechanism. Asparagine 134 is a binding site for substrate. 2 residues coordinate FMN: lysine 166 and valine 195. Residue 196 to 197 (NS) participates in substrate binding. Residues glycine 224, 251-252 (GG), and 273-274 (GT) contribute to the FMN site.

It belongs to the dihydroorotate dehydrogenase family. Type 1 subfamily. Homodimer. FMN serves as cofactor.

Its subcellular location is the cytoplasm. The catalysed reaction is (S)-dihydroorotate + fumarate = orotate + succinate. Its pathway is pyrimidine metabolism; UMP biosynthesis via de novo pathway. Functionally, catalyzes the conversion of dihydroorotate to orotate with fumarate as the electron acceptor. Molecular oxygen can replace fumarate in vitro. The chain is Dihydroorotate dehydrogenase (fumarate) (pyr4) from Trypanosoma cruzi (strain CL Brener).